The sequence spans 302 residues: Large ribosomal subunit protein uL18 (302 aa).

This sequence belongs to the universal ribosomal protein uL18 family. Component of the large ribosomal subunit (LSU).

It is found in the cytoplasm. The protein localises to the nucleus. Component of the ribosome, a large ribonucleoprotein complex responsible for the synthesis of proteins in the cell. The small ribosomal subunit (SSU) binds messenger RNAs (mRNAs) and translates the encoded message by selecting cognate aminoacyl-transfer RNA (tRNA) molecules. The large subunit (LSU) contains the ribosomal catalytic site termed the peptidyl transferase center (PTC), which catalyzes the formation of peptide bonds, thereby polymerizing the amino acids delivered by tRNAs into a polypeptide chain. The nascent polypeptides leave the ribosome through a tunnel in the LSU and interact with protein factors that function in enzymatic processing, targeting, and the membrane insertion of nascent chains at the exit of the ribosomal tunnel. The chain is Large ribosomal subunit protein uL18 (RPL5) from Cucumis sativus (Cucumber).